The primary structure comprises 444 residues: Trimethylamine monooxygenase (444 aa).

FAD-binding residues include C12, E37, Q39, L45, and W46. 2 residues coordinate NADP(+): W70 and N72. N72 and V125 together coordinate FAD. Residues Y170, S202, S203, S205, R226, H227, and N288 each coordinate NADP(+). Positions 315 and 318 each coordinate FAD. R409 lines the NADP(+) pocket.

Belongs to the FMO family. As to quaternary structure, homodimer. Requires FAD as cofactor.

The catalysed reaction is trimethylamine + NADPH + O2 = trimethylamine N-oxide + NADP(+) + H2O. In terms of biological role, catalyzes the oxidation of trimethylamine (TMA) to produce trimethylamine N-oxide (TMAO). In vitro, has a broad substrate specificity, oxidizing many nitrogen- and sulfur-containing compounds, including dimethylamine (DMA), dimethylsulfide (DMS), dimethylsulfoxide (DMSO) and methimazole. TMA shows the highest affinity. In Pelagibacter sp. (strain HTCC7211), this protein is Trimethylamine monooxygenase.